Here is a 261-residue protein sequence, read N- to C-terminus: Proliferating cell nuclear antigen (261 aa).

N6-acetyllysine is present on residues Lys14, Lys77, and Lys80. Residues 61 to 80 (RCDRNLAMGVNLTSMSKILK) mediate DNA binding. Cysteines 135 and 162 form a disulfide. A Glycyl lysine isopeptide (Lys-Gly) (interchain with G-Cter in SUMO2); alternate cross-link involves residue Lys164. Lys164 participates in a covalent cross-link: Glycyl lysine isopeptide (Lys-Gly) (interchain with G-Cter in ubiquitin); alternate. Tyr211 carries the phosphotyrosine; by EGFR modification. Lys248 is modified (N6-acetyllysine). Lys254 participates in a covalent cross-link: Glycyl lysine isopeptide (Lys-Gly) (interchain with G-Cter in SUMO2).

Belongs to the PCNA family. Homotrimer. Interacts with p300/EP300; the interaction occurs on chromatin in UV-irradiated damaged cells. Interacts with CREBBP (via transactivation domain and C-terminus); the interaction occurs on chromatin in UV-irradiated damaged cells. Directly interacts with POLD1, POLD3 and POLD4 subunits of the DNA polymerase delta complex, POLD3 being the major interacting partner; the interaction with POLD3 is inhibited by CDKN1A/p21(CIP1). Forms a complex with activator 1 heteropentamer in the presence of ATP. Interacts with EXO1, POLH, POLK, DNMT1, ERCC5, FEN1, CDC6 and POLDIP2. Interacts with POLB. Interacts with APEX2; this interaction is triggered by reactive oxygen species and increased by misincorporation of uracil in nuclear DNA. Forms a ternary complex with DNTTIP2 and core histone. Interacts with KCTD10. Interacts with PPP1R15A. Interacts with SMARCA5/SNF2H. Interacts with BAZ1B/WSTF; the interaction is direct and is required for BAZ1B/WSTF binding to replication foci during S phase. Interacts with HLTF and SHPRH. Interacts with NUDT15. Interaction is disrupted in response to UV irradiation and acetylation. Interacts with CDKN1A/p21(CIP1) and CDT1; interacts via their PIP-box which also recruits the DCX(DTL) complex. The interaction with CDKN1A inhibits POLD3 binding. Interacts with DDX11. Interacts with EGFR; positively regulates PCNA. Interacts with PARPBP. Interacts (when ubiquitinated) with SPRTN; leading to enhance RAD18-mediated PCNA ubiquitination. Interacts (when polyubiquitinated) with ZRANB3. Interacts with SMARCAD1. Interacts with CDKN1C. Interacts with PCLAF (via PIP-box). Interacts with RTEL1 (via PIP-box); the interaction is direct and essential for the suppression of telomere fragility. Interacts with FAM111A (via PIP-box); the interaction is direct and required for PCNA loading on chromatin binding. Interacts with LIG1. Interacts with SETMAR. Interacts with ANKRD17. Interacts with FBXO18/FBH1 (via PIP-box); the interaction recruits the DCX(DTL) complex and promotes ubiquitination and degradation of FBXO18/FBH1. Interacts with POLN. Interacts with SDE2 (via PIP-box); the interaction is direct and prevents ultraviolet light induced monoubiquitination. Component of the replisome complex composed of at least DONSON, MCM2, MCM7, PCNA and TICRR; interaction at least with PCNA occurs during DNA replication. Interacts with MAPK15; the interaction is chromatin binding dependent and prevents MDM2-mediated PCNA destruction by inhibiting the association of PCNA with MDM2. Interacts with PARP10 (via PIP-box). Interacts with DDI2. Interacts with HMCES (via PIP-box). Interacts with TRAIP (via PIP-box). Interacts with UHRF2. Interacts with ALKBH2; this interaction is enhanced during the S-phase of the cell cycle. Interacts with ATAD5; the interaction promotes USP1-mediated PCNA deubiquitination. Interacts (when phosphorylated) with GRB2. Interacts with ANG. Interacts with nuclear UNG; this interaction mediates UNG recruitment to S-phase replication foci. Interacts with ERCC6L2 (via an atypical PIP-box); this interaction facilitates cenrtomeric localization of ERCC6L2. In terms of processing, phosphorylated. Phosphorylation at Tyr-211 by EGFR stabilizes chromatin-associated PCNA. Acetylated by CREBBP and p300/EP300; preferentially acetylated by CREBBP on Lys-80, Lys-13 and Lys-14 and on Lys-77 by p300/EP300 upon loading on chromatin in response to UV irradiation. Lysine acetylation disrupts association with chromatin, hence promoting PCNA ubiquitination and proteasomal degradation in response to UV damage in a CREBBP- and EP300-dependent manner. Acetylation disrupts interaction with NUDT15 and promotes degradation. Post-translationally, ubiquitinated. Following DNA damage, can be either monoubiquitinated to stimulate direct bypass of DNA lesions by specialized DNA polymerases or polyubiquitinated to promote recombination-dependent DNA synthesis across DNA lesions by template switching mechanisms. Following induction of replication stress, monoubiquitinated by the UBE2B-RAD18 complex on Lys-164, leading to recruit translesion (TLS) polymerases, which are able to synthesize across DNA lesions in a potentially error-prone manner. An error-free pathway also exists and requires non-canonical polyubiquitination on Lys-164 through 'Lys-63' linkage of ubiquitin moieties by the E2 complex UBE2N-UBE2V2 and the E3 ligases, HLTF, RNF8 and SHPRH. This error-free pathway, also known as template switching, employs recombination mechanisms to synthesize across the lesion, using as a template the undamaged, newly synthesized strand of the sister chromatid. Monoubiquitination at Lys-164 also takes place in undamaged proliferating cells, and is mediated by the DCX(DTL) complex, leading to enhance PCNA-dependent translesion DNA synthesis. Sumoylated during S phase. In terms of processing, methylated on glutamate residues by ARMT1.

The protein localises to the nucleus. Auxiliary protein of DNA polymerase delta and epsilon, is involved in the control of eukaryotic DNA replication by increasing the polymerase's processibility during elongation of the leading strand. Induces a robust stimulatory effect on the 3'-5' exonuclease and 3'-phosphodiesterase, but not apurinic-apyrimidinic (AP) endonuclease, APEX2 activities. Has to be loaded onto DNA in order to be able to stimulate APEX2. Plays a key role in DNA damage response (DDR) by being conveniently positioned at the replication fork to coordinate DNA replication with DNA repair and DNA damage tolerance pathways. Acts as a loading platform to recruit DDR proteins that allow completion of DNA replication after DNA damage and promote postreplication repair: Monoubiquitinated PCNA leads to recruitment of translesion (TLS) polymerases, while 'Lys-63'-linked polyubiquitination of PCNA is involved in error-free pathway and employs recombination mechanisms to synthesize across the lesion. This chain is Proliferating cell nuclear antigen (Pcna), found in Rattus norvegicus (Rat).